The sequence spans 338 residues: S-adenosylmethionine:tRNA ribosyltransferase-isomerase (338 aa).

This sequence belongs to the QueA family. As to quaternary structure, monomer.

The protein resides in the cytoplasm. It catalyses the reaction 7-aminomethyl-7-carbaguanosine(34) in tRNA + S-adenosyl-L-methionine = epoxyqueuosine(34) in tRNA + adenine + L-methionine + 2 H(+). It functions in the pathway tRNA modification; tRNA-queuosine biosynthesis. Transfers and isomerizes the ribose moiety from AdoMet to the 7-aminomethyl group of 7-deazaguanine (preQ1-tRNA) to give epoxyqueuosine (oQ-tRNA). This is S-adenosylmethionine:tRNA ribosyltransferase-isomerase from Francisella philomiragia subsp. philomiragia (strain ATCC 25017 / CCUG 19701 / FSC 153 / O#319-036).